We begin with the raw amino-acid sequence, 127 residues long: Lymphocyte antigen 6D (127 aa).

Residues 1-20 form the signal peptide; that stretch reads MKTALLVLLVLAVATSPAWA. Positions 21–108 constitute a UPAR/Ly6 domain; the sequence is LRCHVCTNSA…AAPGHALLSS (88 aa). 5 disulfides stabilise this stretch: C23/C45, C26/C32, C38/C63, C67/C86, and C87/C92. The GPI-anchor amidated serine moiety is linked to residue S98. Residues 99–127 constitute a propeptide, removed in mature form; it reads AAPGHALLSSVTLGLATSLSLLTVMALCL.

In terms of tissue distribution, lymphoid cells lacking Ly6d, called ALP (all-lymphoid progenitor), retain full lymphoid potential and early thymic seeding activity, whereas cells containing Ly6d, called BLP (B-cell-biased lymphoid progenitor), up-regulate the B-cell specifying factors Ebf1 and Pax5 and behave essentially as B-cell progenitors (at protein level). Thymocytes and B-cells.

The protein localises to the cell membrane. Its function is as follows. May act as a specification marker at earliest stage specification of lymphocytes between B- and T-cell development. Marks the earliest stage of B-cell specification. The chain is Lymphocyte antigen 6D (Ly6d) from Mus musculus (Mouse).